Consider the following 207-residue polypeptide: ATP-dependent Clp protease proteolytic subunit 1 (207 aa).

Catalysis depends on serine 103, which acts as the Nucleophile. The active site involves histidine 128.

Belongs to the peptidase S14 family. In terms of assembly, fourteen ClpP subunits assemble into 2 heptameric rings which stack back to back to give a disk-like structure with a central cavity, resembling the structure of eukaryotic proteasomes.

The protein localises to the cytoplasm. The catalysed reaction is Hydrolysis of proteins to small peptides in the presence of ATP and magnesium. alpha-casein is the usual test substrate. In the absence of ATP, only oligopeptides shorter than five residues are hydrolyzed (such as succinyl-Leu-Tyr-|-NHMec, and Leu-Tyr-Leu-|-Tyr-Trp, in which cleavage of the -Tyr-|-Leu- and -Tyr-|-Trp bonds also occurs).. Its function is as follows. Cleaves peptides in various proteins in a process that requires ATP hydrolysis. Has a chymotrypsin-like activity. Plays a major role in the degradation of misfolded proteins. This chain is ATP-dependent Clp protease proteolytic subunit 1, found in Synechococcus sp. (strain CC9605).